A 179-amino-acid polypeptide reads, in one-letter code: Replication restart protein DnaT (179 aa).

The span at 151–168 shows a compositional bias: polar residues; sequence SRSSNGGMPQRDINSVSE. The tract at residues 151 to 179 is disordered; sequence SRSSNGGMPQRDINSVSEPDNHIPPGFRG.

It belongs to the DnaT family. In terms of assembly, homooligomerizes. Interacts with PriB. Component of the replication restart primosome. Primosome assembly occurs via a 'hand-off' mechanism. PriA binds to replication forks, subsequently PriB then DnaT bind; DnaT then displaces ssDNA to generate the helicase loading substrate.

In terms of biological role, involved in the restart of stalled replication forks, which reloads the replicative helicase on sites other than the origin of replication. Can function in multiple replication restart pathways. Displaces ssDNA from a PriB-ssDNA complex. Probably forms a spiral filament on ssDNA. This Salmonella arizonae (strain ATCC BAA-731 / CDC346-86 / RSK2980) protein is Replication restart protein DnaT.